The following is a 297-amino-acid chain: Inosose dehydratase (297 aa).

This sequence belongs to the IolE/MocC family. The cofactor is glutathione. It depends on Co(2+) as a cofactor. Mn(2+) is required as a cofactor.

It carries out the reaction scyllo-inosose = 3D-3,5/4-trihydroxycyclohexane-1,2-dione + H2O. The protein operates within polyol metabolism; myo-inositol degradation into acetyl-CoA; acetyl-CoA from myo-inositol: step 2/7. Its function is as follows. Catalyzes the dehydration of inosose (2-keto-myo-inositol, 2KMI or 2,4,6/3,5-pentahydroxycyclohexanone) to 3D-(3,5/4)-trihydroxycyclohexane-1,2-dione (D-2,3-diketo-4-deoxy-epi-inositol). The protein is Inosose dehydratase of Clostridium perfringens (strain ATCC 13124 / DSM 756 / JCM 1290 / NCIMB 6125 / NCTC 8237 / Type A).